The chain runs to 476 residues: Aspartyl/glutamyl-tRNA(Asn/Gln) amidotransferase subunit B (476 aa).

It belongs to the GatB/GatE family. GatB subfamily. As to quaternary structure, heterotrimer of A, B and C subunits.

It carries out the reaction L-glutamyl-tRNA(Gln) + L-glutamine + ATP + H2O = L-glutaminyl-tRNA(Gln) + L-glutamate + ADP + phosphate + H(+). The catalysed reaction is L-aspartyl-tRNA(Asn) + L-glutamine + ATP + H2O = L-asparaginyl-tRNA(Asn) + L-glutamate + ADP + phosphate + 2 H(+). In terms of biological role, allows the formation of correctly charged Asn-tRNA(Asn) or Gln-tRNA(Gln) through the transamidation of misacylated Asp-tRNA(Asn) or Glu-tRNA(Gln) in organisms which lack either or both of asparaginyl-tRNA or glutaminyl-tRNA synthetases. The reaction takes place in the presence of glutamine and ATP through an activated phospho-Asp-tRNA(Asn) or phospho-Glu-tRNA(Gln). The polypeptide is Aspartyl/glutamyl-tRNA(Asn/Gln) amidotransferase subunit B (Geobacillus thermodenitrificans (strain NG80-2)).